Here is a 341-residue protein sequence, read N- to C-terminus: D-aspartate oxidase (341 aa).

The residue at position 1 (Met-1) is a Blocked amino end (Met). 7 residues coordinate FAD: Asp-36, Lys-37, Thr-43, Ser-44, Met-50, Gly-307, and Ile-311. Residues 339–341 carry the Microbody targeting signal motif; it reads SKL.

Belongs to the DAMOX/DASOX family. As to quaternary structure, monomer. Interacts with PEX5; the interaction is direct and required for localization of DDO to the peroxisome. Requires FAD as cofactor. As to expression, in the kidney, expressed in epithelial cells of the proximal tubules and in the liver (at protein level).

It localises to the peroxisome matrix. The protein localises to the cytoplasm. Its subcellular location is the cytosol. The enzyme catalyses D-aspartate + O2 + H2O = oxaloacetate + H2O2 + NH4(+). The catalysed reaction is D-glutamate + O2 + H2O = H2O2 + 2-oxoglutarate + NH4(+). With respect to regulation, inhibited by phenylglyoxal; chemical modification of arginine residues in the enzyme with phenylglyoxal leads to the irreversible loss of activity towards dicarboxylic D-amino acids, paralleled by a transient appearance of activity versus monocarboxylic ones. Its function is as follows. Selectively catalyzes the oxidative deamination of acidic amino acids. Suppresses the level of D-aspartate in the brain, an amino acid that can act as an agonist for glutamate receptors. Protects the organism from the toxicity of D-amino acids. May also function in the intestine. This Bos taurus (Bovine) protein is D-aspartate oxidase (DDO).